We begin with the raw amino-acid sequence, 107 residues long: Large ribosomal subunit protein uL24 (107 aa).

Belongs to the universal ribosomal protein uL24 family. In terms of assembly, part of the 50S ribosomal subunit.

Functionally, one of two assembly initiator proteins, it binds directly to the 5'-end of the 23S rRNA, where it nucleates assembly of the 50S subunit. One of the proteins that surrounds the polypeptide exit tunnel on the outside of the subunit. The sequence is that of Large ribosomal subunit protein uL24 from Natranaerobius thermophilus (strain ATCC BAA-1301 / DSM 18059 / JW/NM-WN-LF).